Reading from the N-terminus, the 243-residue chain is Large ribosomal subunit protein uL2 (243 aa).

A disordered region spans residues V198–E243. Residues P221–S231 are compositionally biased toward basic and acidic residues.

The protein belongs to the universal ribosomal protein uL2 family. Part of the 50S ribosomal subunit. Forms a bridge to the 30S subunit in the 70S ribosome.

One of the primary rRNA binding proteins. Required for association of the 30S and 50S subunits to form the 70S ribosome, for tRNA binding and peptide bond formation. It has been suggested to have peptidyltransferase activity; this is somewhat controversial. Makes several contacts with the 16S rRNA in the 70S ribosome. This Natronomonas pharaonis (strain ATCC 35678 / DSM 2160 / CIP 103997 / JCM 8858 / NBRC 14720 / NCIMB 2260 / Gabara) (Halobacterium pharaonis) protein is Large ribosomal subunit protein uL2.